The primary structure comprises 568 residues: Protein downstream neighbor of son homolog (568 aa).

2 disordered regions span residues 28 to 48 (NKLAARVSNNNNRRPRHQVDE) and 311 to 355 (MPLK…DDDE). Over residues 315-335 (SDNSGNAHDNSFNEESTTTSL) the composition is skewed to polar residues.

Belongs to the DONSON family. As to expression, expression peaks during late G1 and S phase (at protein level).

The protein resides in the nucleus. Functionally, essential for DNA amplification in the ovary and required for cell proliferation during development. The polypeptide is Protein downstream neighbor of son homolog (hd) (Drosophila melanogaster (Fruit fly)).